The sequence spans 133 residues: Interleukin-4 (133 aa).

The first 24 residues, 1-24, serve as a signal peptide directing secretion; that stretch reads MGLTSQLIPTLVCLLVCTSNFAHG. 3 disulfide bridges follow: C27–C133, C48–C85, and C70–C105. N62, N96, N102, and N108 each carry an N-linked (GlcNAc...) asparagine glycan.

This sequence belongs to the IL-4/IL-13 family.

The protein resides in the secreted. Participates in at least several B-cell activation processes as well as of other cell types. It is a costimulator of DNA-synthesis. It induces the expression of class II MHC molecules on resting B-cells. It enhances both secretion and cell surface expression of IgE and IgG1. It also regulates the expression of the low affinity Fc receptor for IgE (CD23) on both lymphocytes and monocytes. Positively regulates IL31RA expression in macrophages. Stimulates autophagy in dendritic cells by interfering with mTORC1 signaling and through the induction of RUFY4. The polypeptide is Interleukin-4 (IL4) (Lama glama (Llama)).